The primary structure comprises 250 residues: Proteasome subunit alpha type-4 (250 aa).

Belongs to the peptidase T1A family. In terms of assembly, the 26S proteasome consists of a 20S proteasome core and two 19S regulatory subunits. The 20S proteasome core is composed of 28 subunits that are arranged in four stacked rings, resulting in a barrel-shaped structure. The two end rings are each formed by seven alpha subunits, and the two central rings are each formed by seven beta subunits. The catalytic chamber with the active sites is on the inside of the barrel.

Its subcellular location is the cytoplasm. It localises to the nucleus. In terms of biological role, the proteasome is a multicatalytic proteinase complex which is characterized by its ability to cleave peptides with Arg, Phe, Tyr, Leu, and Glu adjacent to the leaving group at neutral or slightly basic pH. The proteasome has an ATP-dependent proteolytic activity. This Dictyostelium discoideum (Social amoeba) protein is Proteasome subunit alpha type-4 (psmA4).